The primary structure comprises 72 residues: Translation initiation factor IF-1 (72 aa).

In terms of domain architecture, S1-like spans 1 to 72 (MAKEDNIEMQ…SKGRIVFRSR (72 aa)).

It belongs to the IF-1 family. In terms of assembly, component of the 30S ribosomal translation pre-initiation complex which assembles on the 30S ribosome in the order IF-2 and IF-3, IF-1 and N-formylmethionyl-tRNA(fMet); mRNA recruitment can occur at any time during PIC assembly.

It is found in the cytoplasm. Functionally, one of the essential components for the initiation of protein synthesis. Stabilizes the binding of IF-2 and IF-3 on the 30S subunit to which N-formylmethionyl-tRNA(fMet) subsequently binds. Helps modulate mRNA selection, yielding the 30S pre-initiation complex (PIC). Upon addition of the 50S ribosomal subunit IF-1, IF-2 and IF-3 are released leaving the mature 70S translation initiation complex. The chain is Translation initiation factor IF-1 from Shewanella loihica (strain ATCC BAA-1088 / PV-4).